A 439-amino-acid polypeptide reads, in one-letter code: Xaa-Pro dipeptidase (439 aa).

The Mn(2+) site is built by Asp244, Asp255, His335, Glu380, and Glu419.

It belongs to the peptidase M24B family. Bacterial-type prolidase subfamily. It depends on Mn(2+) as a cofactor.

It catalyses the reaction Xaa-L-Pro dipeptide + H2O = an L-alpha-amino acid + L-proline. Functionally, splits dipeptides with a prolyl residue in the C-terminal position. This Shewanella sp. (strain MR-7) protein is Xaa-Pro dipeptidase.